Here is a 439-residue protein sequence, read N- to C-terminus: Probable tRNA pseudouridine synthase D (439 aa).

Residue Asp87 is the Nucleophile of the active site. The region spanning Gly166–Leu391 is the TRUD domain.

It belongs to the pseudouridine synthase TruD family.

The enzyme catalyses uridine(13) in tRNA = pseudouridine(13) in tRNA. Functionally, could be responsible for synthesis of pseudouridine from uracil-13 in transfer RNAs. This is Probable tRNA pseudouridine synthase D from Methanococcoides burtonii (strain DSM 6242 / NBRC 107633 / OCM 468 / ACE-M).